The chain runs to 231 residues: Ion-translocating oxidoreductase complex subunit E (231 aa).

The next 6 membrane-spanning stretches (helical) occupy residues 18–38 (ALVQ…ATNA), 39–59 (LGLG…ISTL), 63–83 (TPSE…VSAV), 86–106 (LINA…PLIV), 125–145 (ALSA…MFVL), and 182–202 (PFLL…MLAG).

It belongs to the NqrDE/RnfAE family. As to quaternary structure, the complex is composed of six subunits: RsxA, RsxB, RsxC, RsxD, RsxE and RsxG.

It is found in the cell inner membrane. Part of a membrane-bound complex that couples electron transfer with translocation of ions across the membrane. Required to maintain the reduced state of SoxR. In Escherichia coli O6:K15:H31 (strain 536 / UPEC), this protein is Ion-translocating oxidoreductase complex subunit E.